Consider the following 208-residue polypeptide: Thymidylate kinase (208 aa).

Residue glycine 10–threonine 17 coordinates ATP.

It belongs to the thymidylate kinase family.

The enzyme catalyses dTMP + ATP = dTDP + ADP. Functionally, phosphorylation of dTMP to form dTDP in both de novo and salvage pathways of dTTP synthesis. This chain is Thymidylate kinase, found in Listeria monocytogenes serotype 4b (strain CLIP80459).